A 270-amino-acid chain; its full sequence is A-type potassium channel modulatory protein KCNIP2 (270 aa).

Over residues 1–17 (MRGQGRKESLSDSRDLD) the composition is skewed to basic and acidic residues. Residues 1-33 (MRGQGRKESLSDSRDLDGSYDQLTGHPPGPTKK) form a disordered region. Position 9 is a phosphoserine (Ser9). Residues Cys45 and Cys46 are each lipidated (S-palmitoyl cysteine). The EF-hand 1; degenerate domain occupies 81 to 137 (FELSTVCHRPEGLEQLQEQTKFTRKELQVLYRGFKNECPSGIVNEENFKQIYSQFFP). EF-hand domains lie at 140 to 175 (DSST…ILRG), 176 to 211 (TIDD…IYDM), and 224 to 259 (APRE…DENI). Residues Asp153, Asn155, Asp157, Ser159, Asp164, Asp189, Asn191, Asp193, Cys195, Glu200, Asp237, Asn239, Asp241, and Glu248 each contribute to the Ca(2+) site. Residues 257–270 (ENIMRSMQLFDNVI) form an interaction with KCND2 region.

This sequence belongs to the recoverin family. In terms of assembly, component of heteromultimeric potassium channels. Identified in potassium channel complexes containing KCND1, KCND2, KCND3, KCNIP1, KCNIP2, KCNIP3, KCNIP4, DPP6 and DPP10. The KCND2-KCNIP2 channel complex contains four KCND2 and four KCNIP2 subunits. Interacts with KCND2. Probably part of a complex consisting of KCNIP1, KCNIP2 isoform 3 and KCND2. At least isoform 2 and isoform 3 can self-associate to form homodimers and homotetramers. Isoform 3 interacts with KCNIP1 in a calcium-dependent manner. Interacts with KCND3; each KCNIP2 monomer interacts with two adjacent KCND3 subunits, through both the N-terminal inactivation ball of a KCND3 subunit and a C-terminal helix from the adjacent KCND3 subunit, clamping them together; this interaction modulates the channel gating kinetics. Palmitoylated. Palmitoylation enhances association with the plasma membrane. As to expression, expressed in heart ventricle with isoform 1 as most prominent form.

Its subcellular location is the cell membrane. In terms of biological role, regulatory subunit of Kv4/D (Shal)-type voltage-gated rapidly inactivating A-type potassium channels. Modulates channel density, inactivation kinetics and rate of recovery from inactivation in a calcium-dependent and isoform-specific manner. Involved in KCND2 and KCND3 trafficking to the cell surface. May be required for the expression of I(To) currents in the heart. This Mustela putorius furo (European domestic ferret) protein is A-type potassium channel modulatory protein KCNIP2.